Reading from the N-terminus, the 944-residue chain is Translation initiation factor IF-2 (944 aa).

Positions 55–81 are enriched in low complexity; that stretch reads LTGQAAAPAAAPSSAPRPGARSSAPKP. Residues 55–329 form a disordered region; it reads LTGQAAAPAA…RTKRAEFELR (275 aa). Pro residues predominate over residues 82 to 92; it reads GGRPTPGPQPT. Low complexity predominate over residues 93-107; sequence AAPEVEAPEASDVPV. Residues 123–135 show a composition bias toward basic and acidic residues; that stretch reads ASRKAAAEEKAQA. Composition is skewed to low complexity over residues 136–153 and 211–222; these read EKSA…ETPS and GQRPAAGAAGPR. The segment covering 223-236 has biased composition (pro residues); that stretch reads PAAPRPGSPRPGAP. A compositionally biased stretch (low complexity) spans 244-257; that stretch reads GARPAGFGQRPAGA. The segment covering 258–269 has biased composition (gly residues); the sequence is GRPGGAPGGAGR. Residues 270–283 are compositionally biased toward low complexity; it reads PGAPAAGGFQRPAG. Gly residues predominate over residues 284–310; sequence GFAGRPGGGGRGRGPGGGTAGAFGRGG. Basic residues predominate over residues 311–322; sequence GKSKSRKSKRTK. One can recognise a tr-type G domain in the interval 437–611; the sequence is IRPPVVTVMG…LTADAGLDLR (175 aa). Residues 446–453 are G1; that stretch reads GHVDHGKT. 446–453 provides a ligand contact to GTP; sequence GHVDHGKT. The segment at 471–475 is G2; that stretch reads GITQH. The tract at residues 496-499 is G3; the sequence is DTPG. Residues 496–500 and 550–553 contribute to the GTP site; these read DTPGH and NKVD. The tract at residues 550–553 is G4; it reads NKVD. Positions 586 to 588 are G5; that stretch reads SAL.

Belongs to the TRAFAC class translation factor GTPase superfamily. Classic translation factor GTPase family. IF-2 subfamily.

It localises to the cytoplasm. One of the essential components for the initiation of protein synthesis. Protects formylmethionyl-tRNA from spontaneous hydrolysis and promotes its binding to the 30S ribosomal subunits. Also involved in the hydrolysis of GTP during the formation of the 70S ribosomal complex. The polypeptide is Translation initiation factor IF-2 (Clavibacter michiganensis subsp. michiganensis (strain NCPPB 382)).